The chain runs to 363 residues: Protein RecA (363 aa).

66–73 (GPESSGKT) contacts ATP. The tract at residues 327–363 (YGIDEKSIADRENPEKIKEKREETSEENKTDNSEKTK) is disordered. The segment covering 329 to 363 (IDEKSIADRENPEKIKEKREETSEENKTDNSEKTK) has biased composition (basic and acidic residues).

This sequence belongs to the RecA family.

The protein localises to the cytoplasm. Its function is as follows. Can catalyze the hydrolysis of ATP in the presence of single-stranded DNA, the ATP-dependent uptake of single-stranded DNA by duplex DNA, and the ATP-dependent hybridization of homologous single-stranded DNAs. It interacts with LexA causing its activation and leading to its autocatalytic cleavage. The sequence is that of Protein RecA from Lactobacillus acidophilus (strain ATCC 700396 / NCK56 / N2 / NCFM).